A 100-amino-acid chain; its full sequence is NADH-quinone oxidoreductase subunit K 1 (100 aa).

Helical transmembrane passes span 3-23 (IIKA…LGVI), 28-48 (LITV…ALVA), and 60-80 (IFAF…LGLI).

It belongs to the complex I subunit 4L family. NDH-1 is composed of 14 different subunits. Subunits NuoA, H, J, K, L, M, N constitute the membrane sector of the complex.

The protein localises to the cell inner membrane. It catalyses the reaction a quinone + NADH + 5 H(+)(in) = a quinol + NAD(+) + 4 H(+)(out). Its function is as follows. NDH-1 shuttles electrons from NADH, via FMN and iron-sulfur (Fe-S) centers, to quinones in the respiratory chain. The immediate electron acceptor for the enzyme in this species is believed to be ubiquinone. Couples the redox reaction to proton translocation (for every two electrons transferred, four hydrogen ions are translocated across the cytoplasmic membrane), and thus conserves the redox energy in a proton gradient. The chain is NADH-quinone oxidoreductase subunit K 1 from Aquifex aeolicus (strain VF5).